The chain runs to 123 residues: uncharacterized protein (123 aa).

Residues 5–25 traverse the membrane as a helical segment; sequence GTLVIIFAIVLILCIMLLFFY. Residues 33–54 form a disordered region; sequence PGVLPPPIPPPTPPPPKKKYDH. Positions 35-47 are enriched in pro residues; the sequence is VLPPPIPPPTPPP.

It belongs to the asfivirus CP123L family.

The protein localises to the host membrane. Its subcellular location is the virion. This is an uncharacterized protein from African swine fever virus (isolate Warthog/Namibia/Wart80/1980) (ASFV).